Here is a 341-residue protein sequence, read N- to C-terminus: Uroporphyrinogen decarboxylase (341 aa).

Substrate-binding positions include 25–29, F44, D74, Y151, S206, and H318; that span reads RQAGR.

Belongs to the uroporphyrinogen decarboxylase family. Homodimer.

It localises to the cytoplasm. The enzyme catalyses uroporphyrinogen III + 4 H(+) = coproporphyrinogen III + 4 CO2. Its pathway is porphyrin-containing compound metabolism; protoporphyrin-IX biosynthesis; coproporphyrinogen-III from 5-aminolevulinate: step 4/4. Its function is as follows. Catalyzes the decarboxylation of four acetate groups of uroporphyrinogen-III to yield coproporphyrinogen-III. The chain is Uroporphyrinogen decarboxylase from Christiangramia forsetii (strain DSM 17595 / CGMCC 1.15422 / KT0803) (Gramella forsetii).